The sequence spans 258 residues: Tryptophan synthase alpha chain (258 aa).

Active-site proton acceptor residues include Glu-52 and Asp-63.

This sequence belongs to the TrpA family. As to quaternary structure, tetramer of two alpha and two beta chains.

It catalyses the reaction (1S,2R)-1-C-(indol-3-yl)glycerol 3-phosphate + L-serine = D-glyceraldehyde 3-phosphate + L-tryptophan + H2O. It participates in amino-acid biosynthesis; L-tryptophan biosynthesis; L-tryptophan from chorismate: step 5/5. Its function is as follows. The alpha subunit is responsible for the aldol cleavage of indoleglycerol phosphate to indole and glyceraldehyde 3-phosphate. In Streptococcus pneumoniae (strain P1031), this protein is Tryptophan synthase alpha chain.